The chain runs to 96 residues: Secretoglobin family 2B member 2 (96 aa).

The first 23 residues, 1–23 (MRVTSATCALLLALICSVQLGDA), serve as a signal peptide directing secretion.

It belongs to the secretoglobin family.

It localises to the secreted. This chain is Secretoglobin family 2B member 2 (SCGB2B2), found in Homo sapiens (Human).